Reading from the N-terminus, the 324-residue chain is Adenine deaminase (324 aa).

Residues histidine 11, histidine 13, and histidine 189 each coordinate Zn(2+). Glutamate 192 functions as the Proton donor in the catalytic mechanism. Residue aspartate 270 participates in Zn(2+) binding. Aspartate 271 provides a ligand contact to substrate.

This sequence belongs to the metallo-dependent hydrolases superfamily. Adenosine and AMP deaminases family. Adenine deaminase type 2 subfamily. The cofactor is Zn(2+).

It catalyses the reaction adenine + H2O + H(+) = hypoxanthine + NH4(+). Its function is as follows. Catalyzes the hydrolytic deamination of adenine to hypoxanthine. Plays an important role in the purine salvage pathway and in nitrogen catabolism. The protein is Adenine deaminase of Sinorhizobium medicae (strain WSM419) (Ensifer medicae).